The primary structure comprises 354 residues: CREB/ATF bZIP transcription factor (354 aa).

3 disordered regions span residues 1-95 (MRHS…PGEE), 113-156 (PRQP…AAEM), and 171-214 (GGCS…RKAA). Residue S50 is modified to Phosphoserine. Low complexity predominate over residues 121-132 (DPGLSSPGPLSS). 2 stretches are compositionally biased toward gly residues: residues 133-143 (SGGGSDSGGLW) and 190-199 (PGGGGGGGSG). The bZIP domain maps to 204-267 (QAATKSPRKA…QALQEESRYL (64 aa)). The segment covering 205–214 (AATKSPRKAA) has biased composition (low complexity). The basic motif stretch occupies residues 219 to 226 (RLNRLKKK). A leucine-zipper region spans residues 232–267 (LESRVRGLAAENQELRAENRELGKRVQALQEESRYL). An HCFC1-binding motif (HBM) motif is present at residues 303 to 306 (DHDY).

It belongs to the bZIP family. ATF subfamily. In terms of assembly, interacts with HCFC1; the interaction inhibits CREB3 transcriptional activity. Interacts with CREB3; the interaction occurs only in combination with HCFC1. As to expression, in adults, expressed most abundantly in heart, liver and skeletal muscle, moderately abundant in kidney and pancreas, and barely detectable in lung. In fetal tissues, expressed most abundantly in kidney and very low amounts in heart, lung and liver.

The protein localises to the nucleus. Its function is as follows. Strongly activates transcription when bound to HCFC1. Suppresses the expression of HSV proteins in cells infected with the virus in a HCFC1-dependent manner. Also suppresses the HCFC1-dependent transcriptional activation by CREB3 and reduces the amount of CREB3 in the cell. Able to down-regulate expression of some cellular genes in CREBZF-expressing cells. This chain is CREB/ATF bZIP transcription factor (CREBZF), found in Homo sapiens (Human).